The following is a 186-amino-acid chain: Lipoprotein signal peptidase (186 aa).

Transmembrane regions (helical) follow at residues 11–31 (WIPL…KLLV), 44–64 (VLGD…FSIG), and 70–90 (VLRT…IVFS). Active-site residues include Asp128 and Asp150. The helical transmembrane segment at 145–165 (AFNIADAVIMTCGLLLIISFI) threads the bilayer.

Belongs to the peptidase A8 family.

It localises to the cell inner membrane. It catalyses the reaction Release of signal peptides from bacterial membrane prolipoproteins. Hydrolyzes -Xaa-Yaa-Zaa-|-(S,diacylglyceryl)Cys-, in which Xaa is hydrophobic (preferably Leu), and Yaa (Ala or Ser) and Zaa (Gly or Ala) have small, neutral side chains.. It functions in the pathway protein modification; lipoprotein biosynthesis (signal peptide cleavage). Functionally, this protein specifically catalyzes the removal of signal peptides from prolipoproteins. In Treponema pallidum (strain Nichols), this protein is Lipoprotein signal peptidase.